Here is an 84-residue protein sequence, read N- to C-terminus: Small ribosomal subunit protein uS17 (84 aa).

This sequence belongs to the universal ribosomal protein uS17 family. In terms of assembly, part of the 30S ribosomal subunit.

One of the primary rRNA binding proteins, it binds specifically to the 5'-end of 16S ribosomal RNA. The polypeptide is Small ribosomal subunit protein uS17 (Clostridium botulinum (strain Alaska E43 / Type E3)).